A 125-amino-acid chain; its full sequence is Glycoprotein hormones alpha chain (125 aa).

An N-terminal signal peptide occupies residues 1–30 (MVSAVTTMGCMKAAGVSLLLLYFLLNAADS). Cystine bridges form between Cys-41–Cys-64, Cys-44–Cys-93, Cys-61–Cys-114, Cys-65–Cys-116, and Cys-92–Cys-119. 2 N-linked (GlcNAc...) asparagine glycosylation sites follow: Asn-85 and Asn-110.

It belongs to the glycoprotein hormones subunit alpha family. As to quaternary structure, heterodimer. Glycoprotein hormones are heterodimers composed of a common alpha chain described here and a unique beta chain which confers their biological specificity to the different hormones.

It is found in the secreted. Shared alpha chain of heterodimeric glycoprotein hormones. These hormones bind specific receptors on target cells that in turn activate downstream signaling pathways. Involved in gametogenesis and steroidogenesis. The sequence is that of Glycoprotein hormones alpha chain (cga) from Fundulus heteroclitus (Killifish).